The primary structure comprises 80 residues: Exodeoxyribonuclease 7 small subunit (80 aa).

Belongs to the XseB family. Heterooligomer composed of large and small subunits.

Its subcellular location is the cytoplasm. The catalysed reaction is Exonucleolytic cleavage in either 5'- to 3'- or 3'- to 5'-direction to yield nucleoside 5'-phosphates.. Bidirectionally degrades single-stranded DNA into large acid-insoluble oligonucleotides, which are then degraded further into small acid-soluble oligonucleotides. The sequence is that of Exodeoxyribonuclease 7 small subunit from Aliivibrio fischeri (strain ATCC 700601 / ES114) (Vibrio fischeri).